We begin with the raw amino-acid sequence, 240 residues long: 4-hydroxy-tetrahydrodipicolinate reductase (240 aa).

Residue G7–M12 participates in NAD(+) binding. Residue K35 coordinates NADP(+). NAD(+)-binding positions include G74–T76 and A98–M101. The active-site Proton donor/acceptor is H131. Residue H132 participates in (S)-2,3,4,5-tetrahydrodipicolinate binding. Catalysis depends on K135, which acts as the Proton donor. G141–S142 contacts (S)-2,3,4,5-tetrahydrodipicolinate.

Belongs to the DapB family.

The protein localises to the cytoplasm. It carries out the reaction (S)-2,3,4,5-tetrahydrodipicolinate + NAD(+) + H2O = (2S,4S)-4-hydroxy-2,3,4,5-tetrahydrodipicolinate + NADH + H(+). The catalysed reaction is (S)-2,3,4,5-tetrahydrodipicolinate + NADP(+) + H2O = (2S,4S)-4-hydroxy-2,3,4,5-tetrahydrodipicolinate + NADPH + H(+). Its pathway is amino-acid biosynthesis; L-lysine biosynthesis via DAP pathway; (S)-tetrahydrodipicolinate from L-aspartate: step 4/4. In terms of biological role, catalyzes the conversion of 4-hydroxy-tetrahydrodipicolinate (HTPA) to tetrahydrodipicolinate. The sequence is that of 4-hydroxy-tetrahydrodipicolinate reductase from Alkaliphilus metalliredigens (strain QYMF).